The sequence spans 271 residues: Tryptophan synthase alpha chain (271 aa).

Catalysis depends on proton acceptor residues Glu-53 and Asp-64.

It belongs to the TrpA family. In terms of assembly, tetramer of two alpha and two beta chains.

The catalysed reaction is (1S,2R)-1-C-(indol-3-yl)glycerol 3-phosphate + L-serine = D-glyceraldehyde 3-phosphate + L-tryptophan + H2O. It functions in the pathway amino-acid biosynthesis; L-tryptophan biosynthesis; L-tryptophan from chorismate: step 5/5. In terms of biological role, the alpha subunit is responsible for the aldol cleavage of indoleglycerol phosphate to indole and glyceraldehyde 3-phosphate. This is Tryptophan synthase alpha chain from Streptomyces coelicolor (strain ATCC BAA-471 / A3(2) / M145).